A 266-amino-acid chain; its full sequence is MPIPTPYEDLLRLVLDRGTAKSDRTGTGTRSLFGQQLRYDLSAGFPLITTKKVHLKSVVYELLWFLRGDSNVDWLHRHGVTIWDEWASDTGDLGPIYGVQWRSWPTPSGEHIDQISAALDLLRTDPDSRRIIVSAWNVGEIPRMALPPCHAFFQFYVADGRLSCQLYQRSADLFLGVPFNIASYALLTHMMAAQAGLSVGEFVWTGGDCHIYDNHVEQVRLQLSREPRPYPELVLAHRDSIFDYTYDDVVVHNYDPHPAIKAPVAV.

Position 24 (Arg24) interacts with dUMP. His54 is a (6R)-5,10-methylene-5,6,7,8-tetrahydrofolate binding site. 129 to 130 contributes to the dUMP binding site; it reads RR. The active-site Nucleophile is the Cys149. DUMP-binding positions include 169-172, Asn180, and 210-212; these read RSAD and HIY. Asp172 lines the (6R)-5,10-methylene-5,6,7,8-tetrahydrofolate pocket. Ala265 serves as a coordination point for (6R)-5,10-methylene-5,6,7,8-tetrahydrofolate.

It belongs to the thymidylate synthase family. Bacterial-type ThyA subfamily. In terms of assembly, homodimer.

It is found in the cytoplasm. The enzyme catalyses dUMP + (6R)-5,10-methylene-5,6,7,8-tetrahydrofolate = 7,8-dihydrofolate + dTMP. It functions in the pathway pyrimidine metabolism; dTTP biosynthesis. In terms of biological role, catalyzes the reductive methylation of 2'-deoxyuridine-5'-monophosphate (dUMP) to 2'-deoxythymidine-5'-monophosphate (dTMP) while utilizing 5,10-methylenetetrahydrofolate (mTHF) as the methyl donor and reductant in the reaction, yielding dihydrofolate (DHF) as a by-product. This enzymatic reaction provides an intracellular de novo source of dTMP, an essential precursor for DNA biosynthesis. This Mycobacterium avium (strain 104) protein is Thymidylate synthase.